Reading from the N-terminus, the 89-residue chain is Small ribosomal subunit protein uS15 (89 aa).

Belongs to the universal ribosomal protein uS15 family. As to quaternary structure, part of the 30S ribosomal subunit. Forms a bridge to the 50S subunit in the 70S ribosome, contacting the 23S rRNA.

One of the primary rRNA binding proteins, it binds directly to 16S rRNA where it helps nucleate assembly of the platform of the 30S subunit by binding and bridging several RNA helices of the 16S rRNA. Functionally, forms an intersubunit bridge (bridge B4) with the 23S rRNA of the 50S subunit in the ribosome. This chain is Small ribosomal subunit protein uS15, found in Ruegeria sp. (strain TM1040) (Silicibacter sp.).